Consider the following 106-residue polypeptide: Large ribosomal subunit protein bL21 (106 aa).

Belongs to the bacterial ribosomal protein bL21 family. Part of the 50S ribosomal subunit. Contacts protein L20.

This protein binds to 23S rRNA in the presence of protein L20. The chain is Large ribosomal subunit protein bL21 from Chlamydia caviae (strain ATCC VR-813 / DSM 19441 / 03DC25 / GPIC) (Chlamydophila caviae).